We begin with the raw amino-acid sequence, 184 residues long: Secreted protein B (184 aa).

The first 19 residues, 1–19 (MRFILVLVLILGLVSSSFG), serve as a signal peptide directing secretion. Residue asparagine 129 is glycosylated (N-linked (GlcNAc...) asparagine). The short motif at 164–166 (RGD) is the Cell attachment site element.

The protein belongs to the Sct family.

Its subcellular location is the secreted. The polypeptide is Secreted protein B (29C) (Dictyostelium discoideum (Social amoeba)).